Here is a 433-residue protein sequence, read N- to C-terminus: Histidinol dehydrogenase 2 (433 aa).

3 residues coordinate NAD(+): tyrosine 130, glutamine 192, and asparagine 215. Substrate contacts are provided by serine 238, glutamine 260, and histidine 263. Glutamine 260 and histidine 263 together coordinate Zn(2+). Active-site proton acceptor residues include glutamate 328 and histidine 329. Residues histidine 329, aspartate 362, glutamate 416, and histidine 421 each contribute to the substrate site. Residue aspartate 362 participates in Zn(2+) binding. Histidine 421 contributes to the Zn(2+) binding site.

This sequence belongs to the histidinol dehydrogenase family. The cofactor is Zn(2+).

The catalysed reaction is L-histidinol + 2 NAD(+) + H2O = L-histidine + 2 NADH + 3 H(+). Its pathway is amino-acid biosynthesis; L-histidine biosynthesis; L-histidine from 5-phospho-alpha-D-ribose 1-diphosphate: step 9/9. Catalyzes the sequential NAD-dependent oxidations of L-histidinol to L-histidinaldehyde and then to L-histidine. This is Histidinol dehydrogenase 2 from Trichormus variabilis (strain ATCC 29413 / PCC 7937) (Anabaena variabilis).